We begin with the raw amino-acid sequence, 262 residues long: Putative hydro-lyase Sca_2211 (262 aa).

This sequence belongs to the D-glutamate cyclase family.

The protein is Putative hydro-lyase Sca_2211 of Staphylococcus carnosus (strain TM300).